The primary structure comprises 176 residues: Pro-glucagon (176 aa).

The signal sequence occupies residues 1 to 20 (MKSLYFVAGLLVMLAQGSWQ). The span at 25 to 35 (NTEEKSSSFPA) shows a compositional bias: polar residues. The segment at 25 to 59 (NTEEKSSSFPAPQTDPLGDPDQISEDKRHSQGTFT) is disordered. Ser-54 bears the Phosphoserine mark. The propeptide occupies 84–89 (NKNNIA). 2 positions are modified to phosphoserine: Ser-105 and Ser-108. Arg-127 carries the post-translational modification Arginine amide. Positions 131–145 (DFPEEVNIVEELRRR) are excised as a propeptide. Ser-150 and Ser-152 each carry phosphoserine.

Belongs to the glucagon family. Post-translationally, proglucagon is post-translationally processed in a tissue-specific manner in pancreatic A cells and intestinal L cells. In pancreatic A cells, the major bioactive hormone is glucagon cleaved by PCSK2/PC2. In the intestinal L cells PCSK1/PC1 liberates GLP-1, GLP-2, glicentin and oxyntomodulin. GLP-1 is further N-terminally truncated by post-translational processing in the intestinal L cells resulting in GLP-1(7-37) GLP-1-(7-36)amide. The C-terminal amidation is neither important for the metabolism of GLP-1 nor for its effects on the endocrine pancreas. As to expression, glucagon is secreted in the A cells of the islets of Langerhans. GLP-1, GLP-2, oxyntomodulin and glicentin are secreted from enteroendocrine cells throughout the gastrointestinal tract. GLP-1 and GLP-2 are also secreted in selected neurons in the brain.

Its subcellular location is the secreted. Functionally, plays a key role in glucose metabolism and homeostasis. Regulates blood glucose by increasing gluconeogenesis and decreasing glycolysis. A counterregulatory hormone of insulin, raises plasma glucose levels in response to insulin-induced hypoglycemia. Plays an important role in initiating and maintaining hyperglycemic conditions in diabetes. Its function is as follows. Potent stimulator of glucose-dependent insulin release. Also stimulates insulin release in response to IL6. Plays important roles on gastric motility and the suppression of plasma glucagon levels. May be involved in the suppression of satiety and stimulation of glucose disposal in peripheral tissues, independent of the actions of insulin. Has growth-promoting activities on intestinal epithelium. May also regulate the hypothalamic pituitary axis (HPA) via effects on LH, TSH, CRH, oxytocin, and vasopressin secretion. Increases islet mass through stimulation of islet neogenesis and pancreatic beta cell proliferation. Inhibits beta cell apoptosis. Stimulates intestinal growth and up-regulates villus height in the small intestine, concomitant with increased crypt cell proliferation and decreased enterocyte apoptosis. The gastrointestinal tract, from the stomach to the colon is the principal target for GLP-2 action. Plays a key role in nutrient homeostasis, enhancing nutrient assimilation through enhanced gastrointestinal function, as well as increasing nutrient disposal. Stimulates intestinal glucose transport and decreases mucosal permeability. In terms of biological role, significantly reduces food intake. Inhibits gastric emptying in humans. Suppression of gastric emptying may lead to increased gastric distension, which may contribute to satiety by causing a sensation of fullness. Functionally, may modulate gastric acid secretion and the gastro-pyloro-duodenal activity. May play an important role in intestinal mucosal growth in the early period of life. This is Pro-glucagon (GCG) from Ovis aries (Sheep).